The chain runs to 319 residues: UPF0761 membrane protein PBPRA3489 (319 aa).

6 helical membrane-spanning segments follow: residues 50 to 70, 107 to 127, 143 to 163, 188 to 208, 215 to 235, and 249 to 269; these read LVPM…FAGL, VGIG…DHAL, FSIY…SIAV, ALPV…VPNL, ALLG…GFAL, and ALAV…IVLL.

It belongs to the UPF0761 family.

The protein localises to the cell inner membrane. The sequence is that of UPF0761 membrane protein PBPRA3489 from Photobacterium profundum (strain SS9).